Here is a 163-residue protein sequence, read N- to C-terminus: Nucleotide-binding protein CGSHiGG_08790 (163 aa).

It belongs to the YajQ family.

Nucleotide-binding protein. The protein is Nucleotide-binding protein CGSHiGG_08790 of Haemophilus influenzae (strain PittGG).